The sequence spans 380 residues: Glucose-1-phosphate adenylyltransferase (380 aa).

Residues Gly164, 179 to 180 (EK), and Ser190 each bind alpha-D-glucose 1-phosphate.

Belongs to the bacterial/plant glucose-1-phosphate adenylyltransferase family. As to quaternary structure, homotetramer.

It carries out the reaction alpha-D-glucose 1-phosphate + ATP + H(+) = ADP-alpha-D-glucose + diphosphate. Its pathway is glycan biosynthesis; glycogen biosynthesis. Functionally, involved in the biosynthesis of ADP-glucose, a building block required for the elongation reactions to produce glycogen. Catalyzes the reaction between ATP and alpha-D-glucose 1-phosphate (G1P) to produce pyrophosphate and ADP-Glc. This is Glucose-1-phosphate adenylyltransferase from Lacticaseibacillus casei (strain BL23) (Lactobacillus casei).